The primary structure comprises 300 residues: Mitochondrial GTP/GDP carrier protein 1 (300 aa).

Solcar repeat units follow at residues 8–108, 117–198, and 208–293; these read QSGL…KKDF, GKAM…AKEY, and ATWS…LIPR. Transmembrane regions (helical) follow at residues 14-34, 85-101, 122-142, 173-189, 214-234, and 268-285; these read LLGS…VDTI, QRVY…EFLN, SAAA…LDVL, GWGW…FALF, FISS…LDVI, and GLTP…FSFA.

Belongs to the mitochondrial carrier (TC 2.A.29) family.

It localises to the mitochondrion inner membrane. Functionally, mitochondrial GTP/GDP transporter required for GTP uptake and GDP exit from mitochondria. Involved in mitochondrial iron transport and essential for mitochondrial genome maintenance. This is Mitochondrial GTP/GDP carrier protein 1 (GGC1) from Saccharomyces cerevisiae (strain ATCC 204508 / S288c) (Baker's yeast).